A 380-amino-acid chain; its full sequence is Cytochrome b (380 aa).

A run of 4 helical transmembrane segments spans residues 34–54, 78–99, 114–134, and 179–199; these read FGSL…LLAM, WLIR…YLHI, WNTG…GYVL, and FFAL…IHLT. Heme b is bound by residues His-84 and His-98. Heme b is bound by residues His-183 and His-197. His-202 contacts a ubiquinone. Helical transmembrane passes span 227 to 247, 289 to 309, 321 to 341, and 348 to 368; these read IKDI…ALFS, LGGV…PFLH, FSQL…WVGS, and FIII…ILFP.

The protein belongs to the cytochrome b family. As to quaternary structure, the cytochrome bc1 complex contains 11 subunits: 3 respiratory subunits (MT-CYB, CYC1 and UQCRFS1), 2 core proteins (UQCRC1 and UQCRC2) and 6 low-molecular weight proteins (UQCRH/QCR6, UQCRB/QCR7, UQCRQ/QCR8, UQCR10/QCR9, UQCR11/QCR10 and a cleavage product of UQCRFS1). This cytochrome bc1 complex then forms a dimer. Heme b serves as cofactor.

It is found in the mitochondrion inner membrane. Component of the ubiquinol-cytochrome c reductase complex (complex III or cytochrome b-c1 complex) that is part of the mitochondrial respiratory chain. The b-c1 complex mediates electron transfer from ubiquinol to cytochrome c. Contributes to the generation of a proton gradient across the mitochondrial membrane that is then used for ATP synthesis. The chain is Cytochrome b (MT-CYB) from Numida meleagris (Helmeted guineafowl).